Here is a 232-residue protein sequence, read N- to C-terminus: BTB/POZ domain-containing protein KCTD11 (232 aa).

The BTB domain occupies 1-49 (MLGAMFRADTLMPANLNPQGDGHYFIDRDGKAFRHILNFLRLGRLDLPR).

In terms of assembly, homopentamer. Interacts with KCTD6 and KCTD21; KCTD11 and KCTD6 or KCTD21 may associate in pentameric assemblies. Component of the BCR(KCTD11) E3 ubiquitin ligase complex, at least composed of CUL3 and KCTD11 and RBX1. Interacts (via BTB domain) with CUL3; initially a 4:4 stoichiometry has been reported, however, electron microscopy revealed pentameric states of the BTB domain. Weakly expressed in lung. In the cerebellum, higher expression in non proliferating external granule cells layer than in highly proliferating ones.

It participates in protein modification; protein ubiquitination. Plays a role as a marker and a regulator of neuronal differentiation; Up-regulated by a variety of neurogenic signals, such as retinoic acid, epidermal growth factor/EGF and NGFB/nerve growth factor. Induces apoptosis, growth arrest and the expression of cyclin-dependent kinase inhibitor CDKN1B. Plays a role as a tumor repressor and inhibits cell growth and tumorigenicity of medulloblastoma (MDB). Acts as a probable substrate-specific adapter for a BCR (BTB-CUL3-RBX1) E3 ubiquitin-protein ligase complex towards HDAC1. Functions as antagonist of the Hedgehog pathway on cell proliferation and differentiation by affecting the nuclear transfer of transcription factor GLI1, thus maintaining cerebellar granule cells in undifferentiated state, this effect probably occurs via HDAC1 down-regulation, keeping GLI1 acetylated and inactive. When knock-down, Hedgehog antagonism is impaired and proliferation of granule cells is sustained. Activates the caspase cascade. This Mus musculus (Mouse) protein is BTB/POZ domain-containing protein KCTD11 (Kctd11).